A 1011-amino-acid polypeptide reads, in one-letter code: Translation initiation factor IF-2 (1011 aa).

The segment covering 49–77 (YIHEHGTEESPRRRSAGEDEFKPKIDLSK) has biased composition (basic and acidic residues). 2 disordered regions span residues 49–152 (YIHE…RFIT) and 187–407 (AAPA…LSLS). A compositionally biased stretch (pro residues) spans 93-104 (APPPPPPPPPRP). A compositionally biased stretch (low complexity) spans 105-115 (AVKAPSPVSQE). Over residues 116–126 (PRPPAVPPAPQ) the composition is skewed to pro residues. Low complexity-rich tracts occupy residues 187-212 (AAPA…KAPV) and 228-242 (TAKP…AATP). Pro residues-rich tracts occupy residues 243 to 252 (APTPGRPLPG) and 276 to 290 (SAPP…PPPQ). Over residues 316-329 (GPGGGSGGPGGFQR) the composition is skewed to gly residues. Over residues 361–380 (LAPPGAPANKPAGRPAPARR) the composition is skewed to low complexity. Positions 502-678 (VRPPVVTIMG…CLVADLGDLK (177 aa)) constitute a tr-type G domain. The G1 stretch occupies residues 511 to 518 (GHVDHGKT). 511–518 (GHVDHGKT) is a binding site for GTP. The segment at 536-540 (GITQH) is G2. Positions 564-567 (DTPG) are G3. Residues 564–568 (DTPGH) and 618–621 (NKID) each bind GTP. The interval 618-621 (NKID) is G4. Residues 654 to 656 (SAK) are G5.

This sequence belongs to the TRAFAC class translation factor GTPase superfamily. Classic translation factor GTPase family. IF-2 subfamily.

It is found in the cytoplasm. Functionally, one of the essential components for the initiation of protein synthesis. Protects formylmethionyl-tRNA from spontaneous hydrolysis and promotes its binding to the 30S ribosomal subunits. Also involved in the hydrolysis of GTP during the formation of the 70S ribosomal complex. The polypeptide is Translation initiation factor IF-2 (Koribacter versatilis (strain Ellin345)).